The chain runs to 766 residues: MVTLMPYNYAAPRCGLIDKMIEPKVKRPKTDHTDTHERNRLCNLSQQQQQQQPQQQQTHQQQQQQQQQSHQQSHSSTVLASNGPSSAGAGMGVGVGGGGGSGGGVGGGVGQCSPLGLPPQSQPLQPTIGSLASLSGHYSNGNANPNVNSSSCSLATASSFAQSAGSSFSTYQQAGGTSGGVSGEDGVVGGATVMSHWTHDGTGSSAAVKSESRSPGQVHASLDNGSVAGSNLYGCSSASNPLDGGAVAVNSSAVAAAAAAVYDGKHDYYYYNSMQQYTPPPFYSGYGTPYAAATAARQAKMEPGAAAAAAAYLTPSYAASGNNNSQLYSSPYAGYNNFGQQDYGGYYNEQYGNYYSPANYSPYAVSSPSSSASHGHGFHVAASSNLSESPTDTHSTTPVHQTTHSPHSPLPISPSTGSGIGPLGNVSAAAAAAALNSSGGSSVGTAGSGGVATSKTTPTGKTGRARGRRHQQPSPTRSTASDTGNSEAVKPPERVFVWDLDETLIIFHTLLSGSYANRYTKDHSSLMTIAFRMEEMVFNMADTHFFFNEIEECDQVHIDDVSSDDNGQDLSAYNFATDGFHTNTPPGAPPNLCLPTGVRGGVDWMRKLAFRYRKIKDIYNSYRGNVGTLLGPGKREAWLQIRSEIEVATDNWATLALKCLSMISQRENCVNVLVTSTQLAPALAKVLLFGLGGIFNIENIYSAHKIGHETCYERIVTRFGRKSTYVVIGDGNEEETAAKAMNFPFWRISAHSDIRALYTALDMGFL.

Residues 22–40 show a composition bias toward basic and acidic residues; sequence EPKVKRPKTDHTDTHERNR. Disordered regions lie at residues 22 to 131, 200 to 223, 365 to 419, and 437 to 489; these read EPKV…IGSL, DGTGSSAAVKSESRSPGQVHASLD, VSSP…TGSG, and SSGG…SEAV. Low complexity predominate over residues 45 to 76; that stretch reads SQQQQQQQPQQQQTHQQQQQQQQQSHQQSHSS. Over residues 89 to 110 the composition is skewed to gly residues; sequence AGMGVGVGGGGGSGGGVGGGVG. Low complexity predominate over residues 365–384; that stretch reads VSSPSSSASHGHGFHVAASS. Composition is skewed to polar residues over residues 385 to 401 and 472 to 486; these read NLSESPTDTHSTTPVHQ and QPSPTRSTASDTGNS. Asp499 (nucleophile) is an active-site residue. 3 residues coordinate Mg(2+): Asp499, Asp501, and Asp730. The Proton donor role is filled by Asp501.

It belongs to the HAD-like hydrolase superfamily. EYA family. In terms of assembly, interacts with Dac and So. Requires Mg(2+) as cofactor.

It localises to the nucleus. The catalysed reaction is O-phospho-L-tyrosyl-[protein] + H2O = L-tyrosyl-[protein] + phosphate. Tyrosine phosphatase thought to play a role in transcription regulation during organogenesis through its intrinsic protein phosphatase activity. The phosphatase activity was shown in vitro. Appears to function together with So and Dac in eye development. Required for the survival of eye progenitor cells at a critical stage in morphogenesis. This chain is Protein phosphatase eya (eya), found in Drosophila melanogaster (Fruit fly).